The sequence spans 119 residues: Dihydroneopterin aldolase (119 aa).

Substrate contacts are provided by residues Glu21, Tyr53, and 72 to 73; that span reads IE. Lys99 acts as the Proton donor/acceptor in catalysis.

Belongs to the DHNA family.

It catalyses the reaction 7,8-dihydroneopterin = 6-hydroxymethyl-7,8-dihydropterin + glycolaldehyde. It functions in the pathway cofactor biosynthesis; tetrahydrofolate biosynthesis; 2-amino-4-hydroxy-6-hydroxymethyl-7,8-dihydropteridine diphosphate from 7,8-dihydroneopterin triphosphate: step 3/4. Its function is as follows. Catalyzes the conversion of 7,8-dihydroneopterin to 6-hydroxymethyl-7,8-dihydropterin. This is Dihydroneopterin aldolase (folB) from Streptococcus pyogenes serotype M1.